We begin with the raw amino-acid sequence, 403 residues long: Leu/Ile/Val-binding protein homolog 8 (403 aa).

A signal peptide spans M1 to A26.

Belongs to the leucine-binding protein family.

Its function is as follows. Component of an amino-acid transport system. The protein is Leu/Ile/Val-binding protein homolog 8 of Brucella suis biovar 1 (strain 1330).